A 538-amino-acid polypeptide reads, in one-letter code: NAD(P)H-quinone oxidoreductase chain 4 (538 aa).

A run of 14 helical transmembrane segments spans residues 11–31 (FPWLSLSILFPIVGALIVPFI), 43–63 (YALIISLITFLITVAAYFKGF), 95–115 (MPLILLTSFITSLAVLAAWPV), 119–139 (PKLFFFLILAMDGGQIAVFAV), 143–163 (LLFFLAWELELFPVYLFLAIW), 175–195 (FIIYTAGSSLFILLAGLAMGF), 217–237 (GFQLLCYSGLLIAFGVKLPIV), 251–271 (TAPVHMLLAGILLKMGGYALL), 285–305 (FAPLLIVLGVVNIIYAALTSF), 314–334 (IAYSSISHMGFVLIGIGSFSS), 340–360 (AMLQMVSHGLIGASLFFLVGA), 382–404 (IMFALWTACAFASLALPGMSGFI), 425–445 (IVVASLAAIGVILTPIYLLSM), and 472–492 (IYIIACLLVPIIGIGLYPKIM).

The protein belongs to the complex I subunit 4 family.

Its subcellular location is the cellular thylakoid membrane. It catalyses the reaction a plastoquinone + NADH + (n+1) H(+)(in) = a plastoquinol + NAD(+) + n H(+)(out). The catalysed reaction is a plastoquinone + NADPH + (n+1) H(+)(in) = a plastoquinol + NADP(+) + n H(+)(out). Its function is as follows. NDH-1 shuttles electrons from NAD(P)H, via FMN and iron-sulfur (Fe-S) centers, to quinones in the respiratory chain. The immediate electron acceptor for the enzyme in this species is believed to be plastoquinone. Couples the redox reaction to proton translocation (for every two electrons transferred, four hydrogen ions are translocated across the cytoplasmic membrane), and thus conserves the redox energy in a proton gradient. In Prochlorococcus marinus (strain NATL1A), this protein is NAD(P)H-quinone oxidoreductase chain 4.